A 490-amino-acid polypeptide reads, in one-letter code: Probable glycine dehydrogenase (decarboxylating) subunit 2 (490 aa).

At Lys-273 the chain carries N6-(pyridoxal phosphate)lysine.

It belongs to the GcvP family. C-terminal subunit subfamily. In terms of assembly, the glycine cleavage system is composed of four proteins: P, T, L and H. In this organism, the P 'protein' is a heterodimer of two subunits. Requires pyridoxal 5'-phosphate as cofactor.

The catalysed reaction is N(6)-[(R)-lipoyl]-L-lysyl-[glycine-cleavage complex H protein] + glycine + H(+) = N(6)-[(R)-S(8)-aminomethyldihydrolipoyl]-L-lysyl-[glycine-cleavage complex H protein] + CO2. Its function is as follows. The glycine cleavage system catalyzes the degradation of glycine. The P protein binds the alpha-amino group of glycine through its pyridoxal phosphate cofactor; CO(2) is released and the remaining methylamine moiety is then transferred to the lipoamide cofactor of the H protein. The chain is Probable glycine dehydrogenase (decarboxylating) subunit 2 from Staphylococcus aureus (strain Mu50 / ATCC 700699).